The chain runs to 590 residues: MEMYETLGKVGEGSYGTVMKCKHKNTGQIVAIKIFYERPEQSVNKIAMREIKFLKQFHHENLVNLIEVFRQKKKIHLVFEFIDHTVLDELQHYCHGLESKRLRKYLFQILRAIDYLHSNNIIHRDIKPENILVSQSGITKLCDFGFARTLAAPGDIYTDYVATRWYRAPELVLKDTSYGKPVDIWALGCMIIEMATGNPYLPSSSDLDLLHKIVLKVGNLSPHLQNIFSKSPIFAGVVLPQVQHPKNARKKYPKLNGLLADIVHACLQIDPADRISSSDLLHHEYFTRDGFIEKFMPELKAKLLQEAKVNSLIKPKESSKENELRKDERKTVYTNTLLSSSVLGKEIEKEKKPKEIKVRVIKVKGGRGDISEPKKKEYEGGLCQQDANENVHPMSPDTKLVTIEPPNPINPSTNCNGLKENPHCGGSMTMPPINLTNSNLMAANLNSNLFHPSVRLTERAKKRRTSSQSIGQVMPNSRQEDPGPIQSQMGKGIFNERTGHSDQMSNENKRKLNFSRSDRKEFHFPELPVTIQPKDTKGMEVKQIKMLKRESKKTDSSKIPTLLNVDQNQEKQENTGNAQTERKKNLPDVE.

The Protein kinase domain maps to 4 to 286 (YETLGKVGEG…SSDLLHHEYF (283 aa)). Residues 10 to 18 (VGEGSYGTV) and Lys33 each bind ATP. Residues 45–51 (KIAMREI) carry the [NKR]KIAxRE motif. Asp125 functions as the Proton acceptor in the catalytic mechanism. Thr158 is subject to Phosphothreonine. Tyr160 carries the post-translational modification Phosphotyrosine. Disordered regions lie at residues 459 to 508 (RAKK…SNEN) and 547 to 590 (LKRE…PDVE). The segment covering 466-477 (SSQSIGQVMPNS) has biased composition (polar residues). 2 stretches are compositionally biased toward basic and acidic residues: residues 547-556 (LKRESKKTDS) and 580-590 (TERKKNLPDVE).

It belongs to the protein kinase superfamily. CMGC Ser/Thr protein kinase family. CDC2/CDKX subfamily.

Its subcellular location is the cytoplasm. The catalysed reaction is L-seryl-[protein] + ATP = O-phospho-L-seryl-[protein] + ADP + H(+). It catalyses the reaction L-threonyl-[protein] + ATP = O-phospho-L-threonyl-[protein] + ADP + H(+). The chain is Cyclin-dependent kinase-like 3 from Macaca fascicularis (Crab-eating macaque).